The primary structure comprises 966 residues: Regulator of telomere elongation helicase 1 homolog (966 aa).

One can recognise a Helicase ATP-binding domain in the interval 7-284 (AGIPVHFPFE…QDMAGDEPKD (278 aa)). Residue 42–49 (SPTGTGKT) coordinates ATP. [4Fe-4S] cluster is bound by residues Cys146, Cys164, Cys173, and Cys209. Positions 233–236 (DEAH) match the DEAH box motif. The tract at residues 844–864 (VKIHKRERSSPTAPESTSQVS) is disordered. Residues 853 to 863 (SPTAPESTSQV) show a composition bias toward polar residues. A Phosphothreonine modification is found at Thr855.

This sequence belongs to the helicase family. RAD3/XPD subfamily.

The protein resides in the nucleus. It carries out the reaction ATP + H2O = ADP + phosphate + H(+). Functionally, a probable ATP-dependent DNA helicase implicated in DNA repair and the maintenance of genomic stability. Acts as an anti-recombinase to counteract toxic recombination and limit crossover during meiosis. Regulates meiotic recombination and crossover homeostasis by physically dissociating strand invasion events and thereby promotes noncrossover repair by meiotic synthesis dependent strand annealing (SDSA) as well as disassembly of D loop recombination intermediates. In Drosophila sechellia (Fruit fly), this protein is Regulator of telomere elongation helicase 1 homolog.